The following is a 701-amino-acid chain: Putative pectinesterase/pectinesterase inhibitor 43 (701 aa).

The N-terminal stretch at 1–22 (MNKYVLLGVTALIMAMVICVEA) is a signal peptide. The tract at residues 42–195 (MITKTTVSII…QHLTSNGLAI (154 aa)) is pectinesterase inhibitor 43. 2 stretches are compositionally biased toward low complexity: residues 221 to 256 (GILG…VDSS) and 263 to 275 (SSSE…SSNN). Positions 221-351 (GILGSGSSRD…DPLRKLNPLN (131 aa)) are disordered. Asparagine 267 carries an N-linked (GlcNAc...) asparagine glycan. Polar residues-rich tracts occupy residues 276-287 (RPLDSSKNQQME) and 313-338 (QKST…SSEN). Positions 391 to 688 (NVVVAKDGSG…FAPGNFLRGN (298 aa)) are pectinesterase 43. Positions 467 and 497 each coordinate substrate. The active-site Proton donor; for pectinesterase activity is the aspartate 520. Cysteine 534 and cysteine 554 are oxidised to a cystine. Aspartate 541 (nucleophile; for pectinesterase activity) is an active-site residue. 2 residues coordinate substrate: arginine 609 and tryptophan 611. N-linked (GlcNAc...) asparagine glycosylation occurs at asparagine 637.

It in the N-terminal section; belongs to the PMEI family. The protein in the C-terminal section; belongs to the pectinesterase family. As to expression, expressed in flower buds.

Its subcellular location is the secreted. It localises to the cell wall. It carries out the reaction [(1-&gt;4)-alpha-D-galacturonosyl methyl ester](n) + n H2O = [(1-&gt;4)-alpha-D-galacturonosyl](n) + n methanol + n H(+). It participates in glycan metabolism; pectin degradation; 2-dehydro-3-deoxy-D-gluconate from pectin: step 1/5. In terms of biological role, acts in the modification of cell walls via demethylesterification of cell wall pectin. This Arabidopsis thaliana (Mouse-ear cress) protein is Putative pectinesterase/pectinesterase inhibitor 43 (PME43).